A 585-amino-acid polypeptide reads, in one-letter code: Arginine--tRNA ligase (585 aa).

The 'HIGH' region motif lies at 126–136 (PNIAKEMHVGH).

It belongs to the class-I aminoacyl-tRNA synthetase family. As to quaternary structure, monomer.

The protein resides in the cytoplasm. The catalysed reaction is tRNA(Arg) + L-arginine + ATP = L-arginyl-tRNA(Arg) + AMP + diphosphate. The chain is Arginine--tRNA ligase from Picosynechococcus sp. (strain ATCC 27264 / PCC 7002 / PR-6) (Agmenellum quadruplicatum).